Reading from the N-terminus, the 414-residue chain is Histidine--tRNA ligase (414 aa).

The protein belongs to the class-II aminoacyl-tRNA synthetase family. In terms of assembly, homodimer.

The protein resides in the cytoplasm. It catalyses the reaction tRNA(His) + L-histidine + ATP = L-histidyl-tRNA(His) + AMP + diphosphate + H(+). The polypeptide is Histidine--tRNA ligase (Synechococcus sp. (strain RCC307)).